The following is a 385-amino-acid chain: Probable protein phosphatase 2C 79 (385 aa).

The N-terminal stretch at 1–18 (MLSLFFNFLTSCLWPSSS) is a signal peptide. A PPM-type phosphatase domain is found at 47–356 (DFSMAVVQAN…DDITVVVLFL (310 aa)). A Phosphoserine modification is found at S76. Positions 87, 88, 288, and 347 each coordinate Mn(2+).

This sequence belongs to the PP2C family. It depends on Mg(2+) as a cofactor. The cofactor is Mn(2+).

It catalyses the reaction O-phospho-L-seryl-[protein] + H2O = L-seryl-[protein] + phosphate. The enzyme catalyses O-phospho-L-threonyl-[protein] + H2O = L-threonyl-[protein] + phosphate. In terms of biological role, may dephosphorylate and repress plasma membrane H(+)-ATPases (PM H(+)-ATPases, e.g. AHA1 and AHA2), thus influencing negatively plant growth and fitness. The sequence is that of Probable protein phosphatase 2C 79 from Arabidopsis thaliana (Mouse-ear cress).